The primary structure comprises 108 residues: Small ribosomal subunit protein uS17 (108 aa).

Residues 1–26 (MREKMAEATETQASETSTRGRPKTRV) are disordered. A compositionally biased stretch (low complexity) spans 8–17 (ATETQASETS).

The protein belongs to the universal ribosomal protein uS17 family. As to quaternary structure, part of the 30S ribosomal subunit.

Functionally, one of the primary rRNA binding proteins, it binds specifically to the 5'-end of 16S ribosomal RNA. The protein is Small ribosomal subunit protein uS17 of Myxococcus xanthus (strain DK1622).